Reading from the N-terminus, the 414-residue chain is 2,3-bisphosphoglycerate-independent phosphoglycerate mutase (414 aa).

Belongs to the BPG-independent phosphoglycerate mutase family. A-PGAM subfamily.

It carries out the reaction (2R)-2-phosphoglycerate = (2R)-3-phosphoglycerate. Its pathway is carbohydrate degradation; glycolysis; pyruvate from D-glyceraldehyde 3-phosphate: step 3/5. In terms of biological role, catalyzes the interconversion of 2-phosphoglycerate and 3-phosphoglycerate. The protein is 2,3-bisphosphoglycerate-independent phosphoglycerate mutase of Saccharolobus islandicus (strain M.14.25 / Kamchatka #1) (Sulfolobus islandicus).